A 1096-amino-acid polypeptide reads, in one-letter code: DNA-directed RNA polymerase subunit beta (1096 aa).

Residues 1069–1096 are disordered; sequence DLMQDVNPRRSTPSRPTYESLGSDYQED.

The protein belongs to the RNA polymerase beta chain family. In terms of assembly, in cyanobacteria the RNAP catalytic core is composed of 2 alpha, 1 beta, 1 beta', 1 gamma and 1 omega subunit. When a sigma factor is associated with the core the holoenzyme is formed, which can initiate transcription.

The catalysed reaction is RNA(n) + a ribonucleoside 5'-triphosphate = RNA(n+1) + diphosphate. DNA-dependent RNA polymerase catalyzes the transcription of DNA into RNA using the four ribonucleoside triphosphates as substrates. The protein is DNA-directed RNA polymerase subunit beta of Prochlorococcus marinus (strain SARG / CCMP1375 / SS120).